An 82-amino-acid polypeptide reads, in one-letter code: Cytochrome c-551 (82 aa).

C12, C15, H16, and M61 together coordinate heme c.

Post-translationally, binds 1 heme c group covalently per subunit.

Functionally, this is a prokaryotic monoheme cytochrome, unreactive with mitochondrial cytochrome C oxidase or reductase. It functions in nitrite and nitrate respiration in Pseudomonas, but it is also found in other bacteria. In Ectopseudomonas mendocina (Pseudomonas mendocina), this protein is Cytochrome c-551.